The sequence spans 69 residues: Cytochrome c oxidase subunit 8A, mitochondrial (69 aa).

The N-terminal 25 residues, 1-25, are a transit peptide targeting the mitochondrion; it reads MSVLTPLLLRGLTGSARRLPVPRAK. The short motif at 2–19 is the SIFI-degron element; that stretch reads SVLTPLLLRGLTGSARRL. Topologically, residues 26-36 are mitochondrial matrix; the sequence is IHSLPPDEKLG. Residues 37 to 60 form a helical membrane-spanning segment; sequence IMELAVGLTSCFVTFLLPAGWILS. Residues 61–69 lie on the Mitochondrial intermembrane side of the membrane; sequence HLETYRRPE.

It belongs to the cytochrome c oxidase VIII family. In terms of assembly, component of the cytochrome c oxidase (complex IV, CIV), a multisubunit enzyme composed of 14 subunits. The complex is composed of a catalytic core of 3 subunits MT-CO1, MT-CO2 and MT-CO3, encoded in the mitochondrial DNA, and 11 supernumerary subunits COX4I, COX5A, COX5B, COX6A, COX6B, COX6C, COX7A, COX7B, COX7C, COX8 and NDUFA4, which are encoded in the nuclear genome. The complex exists as a monomer or a dimer and forms supercomplexes (SCs) in the inner mitochondrial membrane with NADH-ubiquinone oxidoreductase (complex I, CI) and ubiquinol-cytochrome c oxidoreductase (cytochrome b-c1 complex, complex III, CIII), resulting in different assemblies (supercomplex SCI(1)III(2)IV(1) and megacomplex MCI(2)III(2)IV(2)). Post-translationally, in response to mitochondrial stress, the precursor protein is ubiquitinated by the SIFI complex in the cytoplasm before mitochondrial import, leading to its degradation. Within the SIFI complex, UBR4 initiates ubiquitin chain that are further elongated or branched by KCMF1.

The protein resides in the mitochondrion inner membrane. It functions in the pathway energy metabolism; oxidative phosphorylation. Functionally, component of the cytochrome c oxidase, the last enzyme in the mitochondrial electron transport chain which drives oxidative phosphorylation. The respiratory chain contains 3 multisubunit complexes succinate dehydrogenase (complex II, CII), ubiquinol-cytochrome c oxidoreductase (cytochrome b-c1 complex, complex III, CIII) and cytochrome c oxidase (complex IV, CIV), that cooperate to transfer electrons derived from NADH and succinate to molecular oxygen, creating an electrochemical gradient over the inner membrane that drives transmembrane transport and the ATP synthase. Cytochrome c oxidase is the component of the respiratory chain that catalyzes the reduction of oxygen to water. Electrons originating from reduced cytochrome c in the intermembrane space (IMS) are transferred via the dinuclear copper A center (CU(A)) of subunit 2 and heme A of subunit 1 to the active site in subunit 1, a binuclear center (BNC) formed by heme A3 and copper B (CU(B)). The BNC reduces molecular oxygen to 2 water molecules using 4 electrons from cytochrome c in the IMS and 4 protons from the mitochondrial matrix. This Gorilla gorilla gorilla (Western lowland gorilla) protein is Cytochrome c oxidase subunit 8A, mitochondrial (COX8A).